The primary structure comprises 126 residues: uncharacterized protein (126 aa).

A helical transmembrane segment spans residues 55 to 77 (MLLINSNLVLSGLLLFIDVYRAA).

It localises to the membrane. This is an uncharacterized protein from Dictyostelium discoideum (Social amoeba).